The chain runs to 808 residues: Sucrose synthase isoform 1 (808 aa).

The GT-B glycosyltransferase stretch occupies residues 277–754; the sequence is MVFNVVILSP…GLKRIQEKYT (478 aa).

This sequence belongs to the glycosyltransferase 1 family. Plant sucrose synthase subfamily. Homotetramer. Expressed in stems, in roots at different developmental stages, and in flower buds, flowers and maturing seeds, with the highest levels in strong utilization sinks for sucrose such as growing stems and tap root tips.

It carries out the reaction an NDP-alpha-D-glucose + D-fructose = a ribonucleoside 5'-diphosphate + sucrose + H(+). With respect to regulation, fructose acts as a non-competitive inhibitor with an inhibition constant of 17.2 mM. In contrast, glucose inhibits uncompetitively with an inhibition constant of 4.3 mM. Sucrose-cleaving enzyme that provides UDP-glucose and fructose for various metabolic pathways. This is Sucrose synthase isoform 1 from Daucus carota (Wild carrot).